Here is a 156-residue protein sequence, read N- to C-terminus: Large ribosomal subunit protein uL22 (156 aa).

Belongs to the universal ribosomal protein uL22 family. As to quaternary structure, part of the 50S ribosomal subunit.

Functionally, this protein binds specifically to 23S rRNA. It makes multiple contacts with different domains of the 23S rRNA in the assembled 50S subunit and ribosome. In terms of biological role, the globular domain of the protein is located near the polypeptide exit tunnel on the outside of the subunit, while an extended beta-hairpin is found that lines the wall of the exit tunnel in the center of the 70S ribosome. In Halobacterium salinarum (strain ATCC 700922 / JCM 11081 / NRC-1) (Halobacterium halobium), this protein is Large ribosomal subunit protein uL22.